The chain runs to 198 residues: MSSRGHSTLPRTLMAPRMISEGDIGGIAQITSSLFLGRASVASNWHLLQARGITCVINATIEIPNFNWPQFEYVKVPLADIPHAPIRLYFDTVADKIHSVSKKHGATLVHCAAGVSRSATLCIAYLMKFHNLCLLEAYNWVKARRPVIRPNLGFWRQLIDYESQLFGKSSVKMVQTPYGIIPDVYEKESRHLMPYWGI.

Residues 26–167 enclose the Tyrosine-protein phosphatase domain; that stretch reads GIAQITSSLF…LIDYESQLFG (142 aa). The Phosphocysteine intermediate role is filled by C111.

The protein belongs to the protein-tyrosine phosphatase family. Non-receptor class dual specificity subfamily.

The catalysed reaction is O-phospho-L-tyrosyl-[protein] + H2O = L-tyrosyl-[protein] + phosphate. It catalyses the reaction O-phospho-L-seryl-[protein] + H2O = L-seryl-[protein] + phosphate. The enzyme catalyses O-phospho-L-threonyl-[protein] + H2O = L-threonyl-[protein] + phosphate. Involved in the inactivation of MAP kinases. Dephosphorylates ERK, JNK and p38 MAP-kinases. Plays a negative role in TCR signaling by dephosphorylating MAP3K7 adapter TAB1 leading to its inactivation. The protein is Dual specificity protein phosphatase 14 (Dusp14) of Mus musculus (Mouse).